The chain runs to 102 residues: Large ribosomal subunit protein uL24 (102 aa).

Belongs to the universal ribosomal protein uL24 family. Part of the 50S ribosomal subunit.

In terms of biological role, one of two assembly initiator proteins, it binds directly to the 5'-end of the 23S rRNA, where it nucleates assembly of the 50S subunit. Its function is as follows. One of the proteins that surrounds the polypeptide exit tunnel on the outside of the subunit. This is Large ribosomal subunit protein uL24 from Lysinibacillus sphaericus (strain C3-41).